The following is a 309-amino-acid chain: Homoserine O-succinyltransferase (309 aa).

Catalysis depends on Cys142, which acts as the Acyl-thioester intermediate. Substrate-binding residues include Lys163 and Ser192. His235 functions as the Proton acceptor in the catalytic mechanism. The active site involves Glu237. Arg249 contacts substrate.

Belongs to the MetA family.

It localises to the cytoplasm. It carries out the reaction L-homoserine + succinyl-CoA = O-succinyl-L-homoserine + CoA. Its pathway is amino-acid biosynthesis; L-methionine biosynthesis via de novo pathway; O-succinyl-L-homoserine from L-homoserine: step 1/1. Its function is as follows. Transfers a succinyl group from succinyl-CoA to L-homoserine, forming succinyl-L-homoserine. This chain is Homoserine O-succinyltransferase, found in Erwinia tasmaniensis (strain DSM 17950 / CFBP 7177 / CIP 109463 / NCPPB 4357 / Et1/99).